Consider the following 476-residue polypeptide: Lactate utilization protein B (476 aa).

2 consecutive 4Fe-4S ferredoxin-type domains span residues 304-334 (GTEF…GHSY) and 353-382 (YDDY…LHEL). [4Fe-4S] cluster contacts are provided by Cys-313, Cys-316, Cys-319, Cys-323, Cys-366, Cys-369, and Cys-373. The disordered stretch occupies residues 440–476 (KGPGPLKAWTESREFPAPSKERFRDWFQTRQKGGNPS). Residues 449 to 466 (TESREFPAPSKERFRDWF) are compositionally biased toward basic and acidic residues. Residues 467-476 (QTRQKGGNPS) show a composition bias toward polar residues.

This sequence belongs to the LutB/YkgF family.

In terms of biological role, is involved in L-lactate degradation and allows cells to grow with lactate as the sole carbon source. Has probably a role as an electron transporter during oxidation of L-lactate. This is Lactate utilization protein B from Geobacillus kaustophilus (strain HTA426).